A 355-amino-acid chain; its full sequence is Protein RecA (355 aa).

Residue 67–74 coordinates ATP; the sequence is GPESSGKT.

This sequence belongs to the RecA family.

It is found in the cytoplasm. Can catalyze the hydrolysis of ATP in the presence of single-stranded DNA, the ATP-dependent uptake of single-stranded DNA by duplex DNA, and the ATP-dependent hybridization of homologous single-stranded DNAs. It interacts with LexA causing its activation and leading to its autocatalytic cleavage. This Shewanella halifaxensis (strain HAW-EB4) protein is Protein RecA.